A 553-amino-acid polypeptide reads, in one-letter code: MDVSNTMLLVAVVAAYWLWFQRISRWLKGPRVWPVLGSLPGLIEQRDRMHDWITENLRACGGTYQTCICAVPFLAKKQGLVTVTCDPKNIEHMLKTRFDNYPKGPTWQAVFHDFLGQGIFNSDGDTWLFQRKTAALEFTTRTLRQAMGRWVNRGIKLRFCPILETAQNNYEPVDLQDLILRLTFDNICGLAFGKDTRTCAPGLPENGFASAFDRATEASLQRFILPEFLWRLKKWLGLGLEVSLSRSLGEIDGYLDAVINTRKQELLSQRESGVQRHDDLLSRFMKKKDQSYSETFLRHVALNFILAGRDTSSVALSWFFWLITTHPTVEDKIVREICSVLIETRGTDVSSWTAEPLEFDEVDRLVYLKAALSETLRLYPSVPEDSKHVVNDDILPDGTFVPAGSSVTYSIYAAGRMKSTWGEDCLEFKPERWISPDDGKFVNHDQYRFVAFNAGPRICLGKDLAYLQMKTIAAAVLLRHRLTVAPGHKVEQKMSLTLFMKNGLLVNVHKRDLEVMMKSLVPKERNDVVVLNGKCNGGIGEGVAVNAAVAVAV.

A helical transmembrane segment spans residues 2–20 (DVSNTMLLVAVVAAYWLWF). Cysteine 459 contacts heme.

The protein belongs to the cytochrome P450 family. The cofactor is heme. In terms of tissue distribution, expressed in leaves, stems, flowers and siliques. Expressed at low levels in roots. Expressed in guard cells of cotyledons and leaves.

Its subcellular location is the membrane. The catalysed reaction is an organic molecule + reduced [NADPH--hemoprotein reductase] + O2 = an alcohol + oxidized [NADPH--hemoprotein reductase] + H2O + H(+). Functionally, catalyzes the omega-hydroxylation of various fatty acids (FA). Acts on saturated and unsaturated fatty acids with chain lengths from C12 to C18. Plays a major role in the biosynthesis of extracellular lipids. Involved in the biosynthesis of hydroxylated fatty acids required for cutin biosynthesis, cuticle development and repression of bacterial type III gene expression. The chain is Cytochrome P450 86A2 (CYP86A2) from Arabidopsis thaliana (Mouse-ear cress).